We begin with the raw amino-acid sequence, 309 residues long: MRTVTVGTRGSALALAQTRWVVARLKEEWPDTDFRIQTISTKGDRDRAALQSLAQKGDKGFWVKEIEDALLAGRIDIAVHSLKDLPTEQPEGLEIASIPKRVDARDVLIGKDGMKRLEDLPSGARVGTSSVRRKAFLRAYRPDLQILDLRGNIDTRLAALGTPDYDAIVLAAAGLIRTEMRHRIDEFIDPDLLLPAPGQGALALETRADDDLSIEVVYAIHDHATDDRVTAEREFLAGLGAGCMAPVGAHATLKDGVLTLEGWVGALDGSQVIRATTSGDPAECADLGAELAADMLGQGAQQLIEAAHR.

S-(dipyrrolylmethanemethyl)cysteine is present on Cys243.

Belongs to the HMBS family. As to quaternary structure, monomer. Dipyrromethane serves as cofactor.

It carries out the reaction 4 porphobilinogen + H2O = hydroxymethylbilane + 4 NH4(+). Its pathway is porphyrin-containing compound metabolism; protoporphyrin-IX biosynthesis; coproporphyrinogen-III from 5-aminolevulinate: step 2/4. In terms of biological role, tetrapolymerization of the monopyrrole PBG into the hydroxymethylbilane pre-uroporphyrinogen in several discrete steps. The protein is Porphobilinogen deaminase of Deinococcus geothermalis (strain DSM 11300 / CIP 105573 / AG-3a).